We begin with the raw amino-acid sequence, 59 residues long: MAVPARRTSKAKKAKRRTHYKLTIKGLNACSNCGEMKKSHHVCPACGHYDGKDVMSKEA.

This sequence belongs to the bacterial ribosomal protein bL32 family.

This chain is Large ribosomal subunit protein bL32C (rpmF3), found in Enterococcus faecalis (strain ATCC 700802 / V583).